We begin with the raw amino-acid sequence, 870 residues long: UvrABC system protein B (870 aa).

The Helicase ATP-binding domain maps to 20 to 410; the sequence is EGVDNNDRTQ…VFAEQVIRPT (391 aa). Residue 33–40 coordinates ATP; sequence GVTGSGKT. The Beta-hairpin signature appears at 86 to 109; sequence YYDYYQPEAYVPRTDTFIEKESSI. The region spanning 425–591 is the Helicase C-terminal domain; sequence QVDDVVGEIR…SVKSRISDIL (167 aa). A UVR domain is found at 620–655; the sequence is KAHLDAMEKQMRDAAANLDFEKAARIRDEIKRLREM. 2 disordered regions span residues 671–698 and 741–870; these read ESPV…QERF and AKPS…RPGK. Over residues 679 to 689 the composition is skewed to basic residues; that stretch reads KGKHNKGVAKH. 2 stretches are compositionally biased toward basic and acidic residues: residues 793-808 and 827-836; these read NSLD…KPVE and TDVKDRDDSA. The segment covering 858–870 has biased composition (basic residues); it reads EKRRPGKTGRPGK.

Belongs to the UvrB family. Forms a heterotetramer with UvrA during the search for lesions. Interacts with UvrC in an incision complex.

The protein resides in the cytoplasm. In terms of biological role, the UvrABC repair system catalyzes the recognition and processing of DNA lesions. A damage recognition complex composed of 2 UvrA and 2 UvrB subunits scans DNA for abnormalities. Upon binding of the UvrA(2)B(2) complex to a putative damaged site, the DNA wraps around one UvrB monomer. DNA wrap is dependent on ATP binding by UvrB and probably causes local melting of the DNA helix, facilitating insertion of UvrB beta-hairpin between the DNA strands. Then UvrB probes one DNA strand for the presence of a lesion. If a lesion is found the UvrA subunits dissociate and the UvrB-DNA preincision complex is formed. This complex is subsequently bound by UvrC and the second UvrB is released. If no lesion is found, the DNA wraps around the other UvrB subunit that will check the other stand for damage. In Mesorhizobium japonicum (strain LMG 29417 / CECT 9101 / MAFF 303099) (Mesorhizobium loti (strain MAFF 303099)), this protein is UvrABC system protein B.